The sequence spans 351 residues: Selenide, water dikinase (351 aa).

Cysteine 20 is a catalytic residue. Residues lysine 23 and 51-53 (TKD) each bind ATP. Position 54 (aspartate 54) interacts with Mg(2+). Residues aspartate 71, aspartate 94, and 142-144 (GHS) contribute to the ATP site. Position 94 (aspartate 94) interacts with Mg(2+). Aspartate 230 is a Mg(2+) binding site.

Belongs to the selenophosphate synthase 1 family. Class I subfamily. In terms of assembly, homodimer. Mg(2+) serves as cofactor.

It carries out the reaction hydrogenselenide + ATP + H2O = selenophosphate + AMP + phosphate + 2 H(+). Functionally, synthesizes selenophosphate from selenide and ATP. This chain is Selenide, water dikinase, found in Pasteurella multocida (strain Pm70).